Here is a 546-residue protein sequence, read N- to C-terminus: uncharacterized protein (546 aa).

3 disordered regions span residues Lys37–Leu101, Gln269–Val300, and Leu392–Cys443. Basic and acidic residues-rich tracts occupy residues Asp81–Gln93 and Ala274–Gly283. Over residues Thr284–Pro298 the composition is skewed to low complexity.

This is an uncharacterized protein from Homo sapiens (Human).